A 550-amino-acid polypeptide reads, in one-letter code: Dipeptide-binding protein (550 aa).

The signal sequence occupies residues 1-22 (MKQAKIIGLSTVIALSGIILVA). The N-palmitoyl cysteine moiety is linked to residue Cys-23. The S-diacylglycerol cysteine moiety is linked to residue Cys-23.

Belongs to the bacterial solute-binding protein 5 family. As to quaternary structure, the complex is composed of two ATP-binding proteins (DppD and DppF), two transmembrane proteins (DppB and DppC) and a solute-binding protein (DppA).

Its subcellular location is the cell membrane. Part of the ABC transporter DppABCDF involved in dipeptide transport. Binds di- and tripeptides with high affinity. Requires a free N-terminal alpha-amino group and an alpha-peptide bound contiguous with the N-terminal amino group, has a strong selectivity for L-residues, and shows preference for dipeptides containing methionine or arginine, followed by hydrophobic tripeptides consisting of leucine or valine residues. The sequence is that of Dipeptide-binding protein from Lactococcus lactis subsp. cremoris (strain MG1363).